A 475-amino-acid chain; its full sequence is UDP-glycosyltransferase 84A4 (475 aa).

H20 serves as the catalytic Proton acceptor. An an anthocyanidin-binding site is contributed by H20. Residues Q342, H357, W360, N361, S362, and E365 each contribute to the UDP-alpha-D-glucose site. G380 is a binding site for an anthocyanidin. Residues D381 and Q382 each coordinate UDP-alpha-D-glucose.

Belongs to the UDP-glycosyltransferase family.

The catalysed reaction is (E)-4-coumarate + UDP-alpha-D-glucose = 4-O-(beta-D-glucosyl)-trans-4-coumarate + UDP + H(+). It catalyses the reaction (E)-ferulate + UDP-alpha-D-glucose = 1-O-[(E)-feruloyl]-beta-D-glucose + UDP. The enzyme catalyses (E)-caffeate + UDP-alpha-D-glucose = 1-O-[(E)-caffeoyl]-beta-D-glucose + UDP. It carries out the reaction (E)-sinapate + UDP-alpha-D-glucose = 1-O-(trans-sinapoyl)-beta-D-glucose + UDP. The catalysed reaction is (E)-cinnamate + UDP-alpha-D-glucose = 1-O-(trans-cinnamoyl)-beta-D-glucose + UDP. In terms of biological role, UDP-glucosyltransferase that forms glucose esters with phenylpropanoids. Glucosylates 4-coumarate, ferulate, caffeate, sinapate and cinnamate. This is UDP-glycosyltransferase 84A4 from Arabidopsis thaliana (Mouse-ear cress).